A 269-amino-acid chain; its full sequence is Interleukin-1 beta (269 aa).

Positions 1 to 116 (MAEVPELASE…TWDNEAYVHD (116 aa)) are cleaved as a propeptide — removed in mature form; by CASP1. Positions 228–241 (FESAQFPNWYISTS) match the Involved in interaction with TMED10 C-terminus motif.

The protein belongs to the IL-1 family. Monomer. In its precursor form, weakly interacts with full-length MEFV; the mature cytokine does not interact at all. Interacts with integrins ITGAV:ITGBV and ITGA5:ITGB1; integrin-binding is required for IL1B signaling. Interacts with cargo receptor TMED10; the interaction is direct and is required for the secretion of IL1B mature form. Interacts with HSP90AB1; the interaction facilitates cargo translocation into the ERGIC. Interacts with HSP90B1; the interaction facilitates cargo translocation into the ERGIC. Post-translationally, activation of the IL1B precursor involves a CASP1-catalyzed proteolytic cleavage. Processing and secretion are temporarily associated. (Microbial infection) Cleavage by S.pyogenes cysteine protease SpeB promotes its activation independently of CASP1. Expressed in activated monocytes/macrophages (at protein level).

It is found in the cytoplasm. The protein localises to the cytosol. The protein resides in the secreted. It localises to the lysosome. Its subcellular location is the extracellular exosome. Its activity is regulated as follows. (Microbial infection) Cleavage by S.pyogenes cysteine protease SpeB promotes its activation independently of CASP1. SpeB-mediated maturation of IL1B plays a dual role depending on infection site: while IL1B inflammatory response prevents bacterial growth during invasive skin infections, it promotes streptococcal infection of the nasopharynx by disrupting colonization resistance mediated by the microbiota. Its function is as follows. Potent pro-inflammatory cytokine. Initially discovered as the major endogenous pyrogen, induces prostaglandin synthesis, neutrophil influx and activation, T-cell activation and cytokine production, B-cell activation and antibody production, and fibroblast proliferation and collagen production. Promotes Th17 differentiation of T-cells. Synergizes with IL12/interleukin-12 to induce IFNG synthesis from T-helper 1 (Th1) cells. Plays a role in angiogenesis by inducing VEGF production synergistically with TNF and IL6. Involved in transduction of inflammation downstream of pyroptosis: its mature form is specifically released in the extracellular milieu by passing through the gasdermin-D (GSDMD) pore. Acts as a sensor of S.pyogenes infection in skin: cleaved and activated by pyogenes SpeB protease, leading to an inflammatory response that prevents bacterial growth during invasive skin infection. In Homo sapiens (Human), this protein is Interleukin-1 beta.